Here is a 408-residue protein sequence, read N- to C-terminus: uncharacterized protein (408 aa).

The helical transmembrane segment at 56 to 76 threads the bilayer; the sequence is YWAGPAAASMVAAVTPYVAWL.

It belongs to the mycobacterial PPE family.

Its subcellular location is the cell membrane. This is an uncharacterized protein from Mycobacterium bovis (strain ATCC BAA-935 / AF2122/97).